A 295-amino-acid polypeptide reads, in one-letter code: 4-hydroxy-tetrahydrodipicolinate synthase (295 aa).

T45 contributes to the pyruvate binding site. Catalysis depends on Y131, which acts as the Proton donor/acceptor. Residue K159 is the Schiff-base intermediate with substrate of the active site. Residue V202 participates in pyruvate binding.

The protein belongs to the DapA family. As to quaternary structure, homotetramer; dimer of dimers.

The protein localises to the cytoplasm. The catalysed reaction is L-aspartate 4-semialdehyde + pyruvate = (2S,4S)-4-hydroxy-2,3,4,5-tetrahydrodipicolinate + H2O + H(+). Its pathway is amino-acid biosynthesis; L-lysine biosynthesis via DAP pathway; (S)-tetrahydrodipicolinate from L-aspartate: step 3/4. In terms of biological role, catalyzes the condensation of (S)-aspartate-beta-semialdehyde [(S)-ASA] and pyruvate to 4-hydroxy-tetrahydrodipicolinate (HTPA). This Methanothrix thermoacetophila (strain DSM 6194 / JCM 14653 / NBRC 101360 / PT) (Methanosaeta thermophila) protein is 4-hydroxy-tetrahydrodipicolinate synthase.